Reading from the N-terminus, the 848-residue chain is Xylosyltransferase (848 aa).

Residues 1–14 (MSLHRTLRRFLRKW) lie on the Cytoplasmic side of the membrane. Residues 15-35 (KALVYAVSFILLIQAFFTFQS) form a helical; Signal-anchor for type II membrane protein membrane-spanning segment. Residues 36–843 (SPNLMEEEHL…PKTELISVKP (808 aa)) lie on the Lumenal side of the membrane. Intrachain disulfides connect cysteine 145–cysteine 173, cysteine 189–cysteine 427, cysteine 446–cysteine 459, and cysteine 448–cysteine 457. Residues valine 219, aspartate 247, and 276-278 (TIW) contribute to the UDP-alpha-D-xylose site. The N-linked (GlcNAc...) asparagine glycan is linked to asparagine 306. 379–380 (DW) contributes to the UDP-alpha-D-xylose binding site. Residues serine 460 and 482–483 (RK) contribute to the UDP-alpha-D-xylose site. 2 disulfide bridges follow: cysteine 529-cysteine 811 and cysteine 794-cysteine 822. An N-linked (GlcNAc...) asparagine glycan is attached at asparagine 530. Residues 824-848 (NTNWSSLSPDPKTELISVKPDGRIR) form a disordered region. An N-linked (GlcNAc...) asparagine glycan is attached at asparagine 826.

The protein belongs to the glycosyltransferase 14 family. XylT subfamily. The cofactor is a divalent metal cation.

The protein localises to the endoplasmic reticulum membrane. It localises to the golgi apparatus membrane. It catalyses the reaction UDP-alpha-D-xylose + L-seryl-[protein] = 3-O-(beta-D-xylosyl)-L-seryl-[protein] + UDP + H(+). Its pathway is glycan metabolism; chondroitin sulfate biosynthesis. It functions in the pathway glycan metabolism; heparan sulfate biosynthesis. Functionally, catalyzes the first step in biosynthesis of glycosaminoglycan. Transfers D-xylose from UDP-D-xylose to specific serine residues of the core protein. Initial enzyme in the biosynthesis of chondroitin sulfate and dermatan sulfate proteoglycans in fibroblasts and chondrocytes. The sequence is that of Xylosyltransferase (xt) from Ciona intestinalis (Transparent sea squirt).